A 270-amino-acid polypeptide reads, in one-letter code: Tryptophan synthase alpha chain (270 aa).

Residues Glu49 and Asp60 each act as proton acceptor in the active site.

Belongs to the TrpA family. In terms of assembly, tetramer of two alpha and two beta chains.

The catalysed reaction is (1S,2R)-1-C-(indol-3-yl)glycerol 3-phosphate + L-serine = D-glyceraldehyde 3-phosphate + L-tryptophan + H2O. The protein operates within amino-acid biosynthesis; L-tryptophan biosynthesis; L-tryptophan from chorismate: step 5/5. Functionally, the alpha subunit is responsible for the aldol cleavage of indoleglycerol phosphate to indole and glyceraldehyde 3-phosphate. This is Tryptophan synthase alpha chain from Paraburkholderia phytofirmans (strain DSM 17436 / LMG 22146 / PsJN) (Burkholderia phytofirmans).